The sequence spans 356 residues: Guanine nucleotide-binding protein alpha-17 subunit (356 aa).

The N-myristoyl glycine moiety is linked to residue Gly2. Residue Cys4 is the site of S-palmitoyl cysteine attachment. The 325-residue stretch at 32–356 (SIVKLLLLGA…QKNLQKAGMM (325 aa)) folds into the G-alpha domain. Residues 35–48 (KLLLLGAGECGKST) are G1 motif. GTP-binding positions include 40-47 (GAGECGKS), 177-183 (LYSRVAT), 202-206 (DVGGQ), 271-274 (NKKD), and Ala328. Mg(2+) is bound by residues Ser47 and Thr183. Positions 175–183 (DILYSRVAT) are G2 motif. The G3 motif stretch occupies residues 198–207 (FRVFDVGGQR). The tract at residues 267–274 (ILFMNKKD) is G4 motif. A G5 motif region spans residues 326–331 (TCATDT).

Belongs to the G-alpha family. G proteins are composed of 3 units; alpha, beta and gamma. The alpha chain contains the guanine nucleotide binding site.

Its subcellular location is the cell projection. The protein localises to the cilium. It localises to the dendrite. Guanine nucleotide-binding proteins (G proteins) are involved as modulators or transducers in various transmembrane signaling systems. This specific G-alpha subunit plays an important role in olfaction and in cilia morphogenesis. Involved in chemotactic responses to attractants diacetyl, pyrazine, 2,4,5-trimethylthiazole, benzaldehyde, isoamyl alcohol, butanone and 2,3-pentanedione. Displays a redundant function with gpa-3 in chemotactic responses. Involved in avoidance responses to copper, sodium dodecyl sulfate and linoleic acid. Involved in osmotic avoidance and mechanosensory responses. Involved in specifying fan-like morphology of cilia of head sensory neurons AWC. This chain is Guanine nucleotide-binding protein alpha-17 subunit (odr-3), found in Caenorhabditis briggsae.